We begin with the raw amino-acid sequence, 502 residues long: ATP synthase subunit alpha (502 aa).

The disordered stretch occupies residues Val115–Asp138. Residue Gly169 to Thr176 participates in ATP binding.

It belongs to the ATPase alpha/beta chains family. F-type ATPases have 2 components, CF(1) - the catalytic core - and CF(0) - the membrane proton channel. CF(1) has five subunits: alpha(3), beta(3), gamma(1), delta(1), epsilon(1). CF(0) has three main subunits: a(1), b(2) and c(9-12). The alpha and beta chains form an alternating ring which encloses part of the gamma chain. CF(1) is attached to CF(0) by a central stalk formed by the gamma and epsilon chains, while a peripheral stalk is formed by the delta and b chains.

It is found in the cell membrane. The enzyme catalyses ATP + H2O + 4 H(+)(in) = ADP + phosphate + 5 H(+)(out). Produces ATP from ADP in the presence of a proton gradient across the membrane. The alpha chain is a regulatory subunit. This chain is ATP synthase subunit alpha, found in Geobacillus sp. (strain WCH70).